A 139-amino-acid polypeptide reads, in one-letter code: Maximins 4/H3 type 6 (139 aa).

The N-terminal stretch at 1–18 is a signal peptide; sequence MNFKYIVAVSFLIASAYA. Residues 19-43 constitute a propeptide that is removed on maturation; the sequence is RSVQNDEQSLSQRDVLEEESLREIR. Asn-70 carries the asparagine amide modification. A propeptide spanning residues 74-118 is cleaved from the precursor; it reads TAEDHEVMKRLEAVMRDLDSLDHPEEASERETRGFNQDEIAKEKR. Ile-138 carries the post-translational modification Isoleucine amide.

Belongs to the bombinin family. Expressed by the skin glands.

The protein localises to the secreted. Maximin-4 shows antibacterial activity against both Gram-positive and Gram-negative bacteria. It also shows antimicrobial activity against the fungus C.albicans, but not against A.flavus nor P.uticale. It has little hemolytic activity. It does not possess a significant cytotoxicity against tumor cell lines. It does not possess a significant anti-HIV activity. In terms of biological role, maximin-H3 shows antibacterial activity against both Gram-positive and Gram-negative bacteria. It also shows antimicrobial activity against the fungus C.albicans. Shows strong hemolytic activity. The polypeptide is Maximins 4/H3 type 6 (Bombina maxima (Giant fire-bellied toad)).